Here is a 501-residue protein sequence, read N- to C-terminus: 4,4'-diapophytoene desaturase (4,4'-diaponeurosporene-forming) (501 aa).

5-17 (VVGAGVTGLAAAA) contributes to the FAD binding site.

It belongs to the carotenoid/retinoid oxidoreductase family. CrtN subfamily.

The enzyme catalyses 15-cis-4,4'-diapophytoene + 3 FAD + 3 H(+) = all-trans-4,4'-diaponeurosporene + 3 FADH2. Its pathway is carotenoid biosynthesis; staphyloxanthin biosynthesis; staphyloxanthin from farnesyl diphosphate: step 2/5. In terms of biological role, involved in the biosynthesis of the yellow-orange carotenoid staphyloxanthin, which plays a role in the virulence via its protective function against oxidative stress. Catalyzes three successive dehydrogenation reactions that lead to the introduction of three double bonds into 4,4'-diapophytoene (dehydrosqualene), with 4,4'-diapophytofluene and 4,4'-diapo-zeta-carotene as intermediates, and 4,4'-diaponeurosporene (the major deep-yellow pigment in staphylococci strains) as the end product. In Staphylococcus haemolyticus (strain JCSC1435), this protein is 4,4'-diapophytoene desaturase (4,4'-diaponeurosporene-forming).